The primary structure comprises 231 residues: Cytidylate kinase (231 aa).

ATP is bound at residue Gly-11–Thr-19.

Belongs to the cytidylate kinase family. Type 1 subfamily.

It is found in the cytoplasm. The enzyme catalyses CMP + ATP = CDP + ADP. It carries out the reaction dCMP + ATP = dCDP + ADP. This Porphyromonas gingivalis (strain ATCC BAA-308 / W83) protein is Cytidylate kinase.